Here is a 1102-residue protein sequence, read N- to C-terminus: PAN2-PAN3 deadenylation complex catalytic subunit PAN2 (1102 aa).

3 WD repeats span residues 20–59 (DYPRPATALAFDTIAELLWAGNDRGRVVSFYGRDLQRYTA), 104–144 (DEME…IVKQ), and 269–308 (NVMSFINLFEIAPSGEALAMADTECNIHLWGSPSKIHFTD). Positions 308 to 445 (DMAIPIEMPK…STDELESLKP (138 aa)) are linker. Residues 423–442 (AVPDPKVEQVPESSTDELES) form a disordered region. Positions 446 to 833 (EAPPIYRNLE…LPAVLLFQVK (388 aa)) constitute a USP domain. The 174-residue stretch at 881–1054 (VGLDTEFVSL…EDARTALKLY (174 aa)) folds into the Exonuclease domain. 4 residues coordinate a divalent metal cation: Asp884, Glu886, Asp993, and Asp1046.

The protein belongs to the peptidase C19 family. PAN2 subfamily. Forms a heterotrimer with an asymmetric homodimer of the regulatory subunit PAN3 to form the poly(A)-nuclease (PAN) deadenylation complex. It depends on a divalent metal cation as a cofactor.

The protein localises to the cytoplasm. It carries out the reaction Exonucleolytic cleavage of poly(A) to 5'-AMP.. Positively regulated by the regulatory subunit PAN3. Catalytic subunit of the poly(A)-nuclease (PAN) deadenylation complex, one of two cytoplasmic mRNA deadenylases involved in mRNA turnover. PAN specifically shortens poly(A) tails of RNA and the activity is stimulated by poly(A)-binding protein PAB1. PAN deadenylation is followed by rapid degradation of the shortened mRNA tails by the CCR4-NOT complex. Deadenylated mRNAs are then degraded by two alternative mechanisms, namely exosome-mediated 3'-5' exonucleolytic degradation, or deadenylation-dependent mRNA decaping and subsequent 5'-3' exonucleolytic degradation by XRN1. May also be involved in post-transcriptional maturation of mRNA poly(A) tails. In Chaetomium globosum (strain ATCC 6205 / CBS 148.51 / DSM 1962 / NBRC 6347 / NRRL 1970) (Soil fungus), this protein is PAN2-PAN3 deadenylation complex catalytic subunit PAN2.